A 101-amino-acid chain; its full sequence is Small ribosomal subunit protein uS14 (101 aa).

It belongs to the universal ribosomal protein uS14 family. As to quaternary structure, part of the 30S ribosomal subunit. Contacts proteins S3 and S10.

In terms of biological role, binds 16S rRNA, required for the assembly of 30S particles and may also be responsible for determining the conformation of the 16S rRNA at the A site. The protein is Small ribosomal subunit protein uS14 of Proteus mirabilis (strain HI4320).